Consider the following 159-residue polypeptide: HSP70 co-chaperone SNL1 (159 aa).

At 1–12 the chain is on the perinuclear space side; the sequence is MSHNAMEHWKSK. A helical; Signal-anchor for type II membrane protein membrane pass occupies residues 13-35; sequence LSKTSTSTYVLLAVIAVVFLVTI. Residues 36-159 are Cytoplasmic-facing; that stretch reads RRPNGSKGKS…AMLKSLDSLK (124 aa). Residues 39 to 64 are disordered; the sequence is NGSKGKSSKKRASKKNKKGKNQFEKA. Positions 44–58 are enriched in basic residues; that stretch reads KSSKKRASKKNKKGK. One can recognise a BAG domain in the interval 73-159; the sequence is QIDNVSLRYG…AMLKSLDSLK (87 aa).

In terms of assembly, interacts with the HSP70 family members SSA1, SSA4, and SSB1. These interactions are strongly reduced by ADP and ATP.

It localises to the endoplasmic reticulum membrane. It is found in the nucleus membrane. Functionally, stimulator of ATPase activity of molecular chaperones of the HSP70 family (principally of the SSA class). Stimulation is important for HSP70-substrate complex dissociation after folding of newly synthesized or refolded proteins. SNL1 is probably involved in nuclear pore biogenesis and in particular the folding or refolding of misfolded NUP116, GLE2 and NIC96. The protein is HSP70 co-chaperone SNL1 (SNL1) of Saccharomyces cerevisiae (strain ATCC 204508 / S288c) (Baker's yeast).